The primary structure comprises 353 residues: Photosystem II protein D1 (353 aa).

T2 carries the N-acetylthreonine modification. T2 carries the post-translational modification Phosphothreonine. The next 3 helical transmembrane spans lie at 29-46, 118-133, and 142-156; these read YIGW…TATS, HFLL…EWEL, and WIAV…AATA. Chlorophyll a is bound at residue H118. Y126 is a binding site for pheophytin a. [CaMn4O5] cluster is bound by residues D170 and E189. A helical membrane pass occupies residues 197-218; it reads FHMLGVAGVFGGSLFSAMHGSL. H198 contributes to the chlorophyll a binding site. Residues H215 and 264–265 each bind a quinone; that span reads SF. Position 215 (H215) interacts with Fe cation. H272 contacts Fe cation. Residues 274 to 288 form a helical membrane-spanning segment; the sequence is FLAAWPVVGIWFTAL. Residues H332, E333, D342, and A344 each coordinate [CaMn4O5] cluster. Residues 345–353 constitute a propeptide that is removed on maturation; it reads AVEAPAVNG.

It belongs to the reaction center PufL/M/PsbA/D family. In terms of assembly, PSII is composed of 1 copy each of membrane proteins PsbA, PsbB, PsbC, PsbD, PsbE, PsbF, PsbH, PsbI, PsbJ, PsbK, PsbL, PsbM, PsbT, PsbX, PsbY, PsbZ, Psb30/Ycf12, at least 3 peripheral proteins of the oxygen-evolving complex and a large number of cofactors. It forms dimeric complexes. The D1/D2 heterodimer binds P680, chlorophylls that are the primary electron donor of PSII, and subsequent electron acceptors. It shares a non-heme iron and each subunit binds pheophytin, quinone, additional chlorophylls, carotenoids and lipids. D1 provides most of the ligands for the Mn4-Ca-O5 cluster of the oxygen-evolving complex (OEC). There is also a Cl(-1) ion associated with D1 and D2, which is required for oxygen evolution. The PSII complex binds additional chlorophylls, carotenoids and specific lipids. serves as cofactor. In terms of processing, tyr-161 forms a radical intermediate that is referred to as redox-active TyrZ, YZ or Y-Z. Post-translationally, C-terminally processed by CTPA; processing is essential to allow assembly of the oxygen-evolving complex and thus photosynthetic growth.

It localises to the plastid. Its subcellular location is the chloroplast thylakoid membrane. It carries out the reaction 2 a plastoquinone + 4 hnu + 2 H2O = 2 a plastoquinol + O2. In terms of biological role, photosystem II (PSII) is a light-driven water:plastoquinone oxidoreductase that uses light energy to abstract electrons from H(2)O, generating O(2) and a proton gradient subsequently used for ATP formation. It consists of a core antenna complex that captures photons, and an electron transfer chain that converts photonic excitation into a charge separation. The D1/D2 (PsbA/PsbD) reaction center heterodimer binds P680, the primary electron donor of PSII as well as several subsequent electron acceptors. This Conocephalum conicum (Snakeskin liverwort) protein is Photosystem II protein D1.